Consider the following 211-residue polypeptide: Ubiquitin-conjugating enzyme E2 S-B (211 aa).

Residues 11-157 (HIIRRVYKEV…ARLMTDIHAQ (147 aa)) form the UBC core domain. C95 (glycyl thioester intermediate) is an active-site residue. The tract at residues 158-211 (GTSLRGKDPTDPCSSASTPVVSGDGPMAKKHAGDRDKKLAAKKKTDKKRALRRL) is disordered. Basic residues predominate over residues 197–211 (AAKKKTDKKRALRRL).

Belongs to the ubiquitin-conjugating enzyme family.

The catalysed reaction is S-ubiquitinyl-[E1 ubiquitin-activating enzyme]-L-cysteine + [E2 ubiquitin-conjugating enzyme]-L-cysteine = [E1 ubiquitin-activating enzyme]-L-cysteine + S-ubiquitinyl-[E2 ubiquitin-conjugating enzyme]-L-cysteine.. It participates in protein modification; protein ubiquitination. In terms of biological role, catalyzes the covalent attachment of ubiquitin to other proteins. Acts as an essential factor of the anaphase promoting complex/cyclosome (APC/C), a cell cycle-regulated ubiquitin ligase that controls progression through mitosis. Acts by specifically elongating 'Lys-11'-linked polyubiquitin chains initiated by the E2 enzyme ube2c/ubch10 on APC/C substrates, enhancing the degradation of APC/C substrates by the proteasome and promoting mitotic exit. The polypeptide is Ubiquitin-conjugating enzyme E2 S-B (ube2s-b) (Xenopus laevis (African clawed frog)).